The following is a 1384-amino-acid chain: RRP12-like protein (1384 aa).

The span at 1–13 shows a compositional bias: basic residues; it reads MGKFRSKLKRNGK. The segment at 1–32 is disordered; the sequence is MGKFRSKLKRNGKGKTWSRGESATSNPTQMKH. A compositionally biased stretch (polar residues) spans 19 to 29; it reads RGESATSNPTQ. Phosphoserine occurs at positions 82, 85, 96, 1094, 1095, 1117, and 1119. 3 disordered regions span residues 1082–1102, 1114–1155, and 1176–1384; these read LRKKQNLEAQEDSSDDELVSG, LADS…IRED, and SAQT…KKYK. Acidic residues-rich tracts occupy residues 1090–1099 and 1114–1127; these read AQEDSSDDEL and LADSDSDLPEDMDA. The segment covering 1176 to 1191 has biased composition (polar residues); that stretch reads SAQTATPAQSQKTKAQ. A phosphoserine mark is found at S1221, S1225, S1227, S1230, S1250, and S1251. Polar residues-rich tracts occupy residues 1276-1285 and 1297-1315; these read SGKTTASSRY and TAGNSDAMSVKSGKSTSRP. A compositionally biased stretch (basic and acidic residues) spans 1321 to 1334; that stretch reads GSKKAKGDMKKSGK. The span at 1348 to 1362 shows a compositional bias: basic residues; that stretch reads LNKRKRSMNSRKFKS. Gly residues predominate over residues 1369 to 1378; that stretch reads AENGGAGGGR.

This sequence belongs to the RRP12 family.

It is found in the nucleus. This Drosophila melanogaster (Fruit fly) protein is RRP12-like protein.